A 313-amino-acid polypeptide reads, in one-letter code: Intracellular endo-alpha-(1-&gt;5)-L-arabinanase (313 aa).

D27 serves as the catalytic Proton acceptor. Residues D27, G105, 144-147 (NAID), and 164-166 (SFW) each bind substrate. Catalysis depends on E201, which acts as the Proton donor. H271 is a binding site for Ca(2+).

It belongs to the glycosyl hydrolase 43 family. Monomer. The cofactor is Ca(2+).

The protein localises to the cytoplasm. It catalyses the reaction Endohydrolysis of (1-&gt;5)-alpha-arabinofuranosidic linkages in (1-&gt;5)-arabinans.. It participates in glycan metabolism; L-arabinan degradation. In terms of biological role, involved in the degradation of arabinan and is a key enzyme in the complete degradation of the plant cell wall. Catalyzes the cleavage of endo alpha-(1-&gt;5)-L-arabinofuranosyl residues in debranched arabinan. The sequence is that of Intracellular endo-alpha-(1-&gt;5)-L-arabinanase (abn-ts) from Geobacillus thermodenitrificans.